Consider the following 432-residue polypeptide: SVP1-like protein 2 (432 aa).

WD repeat units follow at residues 223 to 263 and 268 to 307; these read AHKS…LLYE and LDRA…TSSG.

It belongs to the WD repeat PROPPIN family.

The protein localises to the vacuole membrane. It localises to the cytoplasmic vesicle membrane. Involved in mitochondrial or peroxisomal functions and amino acid signaling pathways. This chain is SVP1-like protein 2 (HSV2), found in Debaryomyces hansenii (strain ATCC 36239 / CBS 767 / BCRC 21394 / JCM 1990 / NBRC 0083 / IGC 2968) (Yeast).